Consider the following 382-residue polypeptide: Pyrimidine monooxygenase RutA (382 aa).

FMN-binding positions include 68-69 (IK), Asn-134, Glu-143, 159-160 (RY), and Ser-209.

Belongs to the NtaA/SnaA/DszA monooxygenase family. RutA subfamily.

It catalyses the reaction uracil + FMNH2 + NADH + O2 = (Z)-3-ureidoacrylate + FMN + NAD(+) + H2O + H(+). The catalysed reaction is thymine + FMNH2 + NADH + O2 = (Z)-2-methylureidoacrylate + FMN + NAD(+) + H2O + H(+). In terms of biological role, catalyzes the pyrimidine ring opening between N-3 and C-4 by an unusual flavin hydroperoxide-catalyzed mechanism, adding oxygen atoms in the process to yield ureidoacrylate peracid, that immediately reacts with FMN forming ureidoacrylate and FMN-N(5)-oxide. The FMN-N(5)-oxide reacts spontaneously with NADH to produce FMN. Requires the flavin reductase RutF to regenerate FMN in vivo. This is Pyrimidine monooxygenase RutA from Escherichia coli O81 (strain ED1a).